The following is a 96-amino-acid chain: Co-chaperonin GroES (96 aa).

This sequence belongs to the GroES chaperonin family. As to quaternary structure, heptamer of 7 subunits arranged in a ring. Interacts with the chaperonin GroEL.

The protein localises to the cytoplasm. Functionally, together with the chaperonin GroEL, plays an essential role in assisting protein folding. The GroEL-GroES system forms a nano-cage that allows encapsulation of the non-native substrate proteins and provides a physical environment optimized to promote and accelerate protein folding. GroES binds to the apical surface of the GroEL ring, thereby capping the opening of the GroEL channel. This Pelagibacter ubique (strain HTCC1062) protein is Co-chaperonin GroES.